We begin with the raw amino-acid sequence, 143 residues long: Transcriptional regulator MraZ (143 aa).

SpoVT-AbrB domains are found at residues 5–47 (TYEP…SAEE) and 76–119 (ASDE…DAAA).

It belongs to the MraZ family. Forms oligomers.

It localises to the cytoplasm. Its subcellular location is the nucleoid. The protein is Transcriptional regulator MraZ of Kocuria rhizophila (strain ATCC 9341 / DSM 348 / NBRC 103217 / DC2201).